Consider the following 599-residue polypeptide: Elongation factor 4 (599 aa).

The 183-residue stretch at 5–187 folds into the tr-type G domain; it reads AHIRNFSIVA…AIVKHLPAPK (183 aa). Residues 17–22 and 134–137 contribute to the GTP site; these read DHGKST and NKID.

The protein belongs to the TRAFAC class translation factor GTPase superfamily. Classic translation factor GTPase family. LepA subfamily.

The protein resides in the cell inner membrane. It carries out the reaction GTP + H2O = GDP + phosphate + H(+). In terms of biological role, required for accurate and efficient protein synthesis under certain stress conditions. May act as a fidelity factor of the translation reaction, by catalyzing a one-codon backward translocation of tRNAs on improperly translocated ribosomes. Back-translocation proceeds from a post-translocation (POST) complex to a pre-translocation (PRE) complex, thus giving elongation factor G a second chance to translocate the tRNAs correctly. Binds to ribosomes in a GTP-dependent manner. The sequence is that of Elongation factor 4 from Ruegeria pomeroyi (strain ATCC 700808 / DSM 15171 / DSS-3) (Silicibacter pomeroyi).